Consider the following 450-residue polypeptide: Probable glycine dehydrogenase (decarboxylating) subunit 1 (450 aa).

Belongs to the GcvP family. N-terminal subunit subfamily. In terms of assembly, the glycine cleavage system is composed of four proteins: P, T, L and H. In this organism, the P 'protein' is a heterodimer of two subunits.

The catalysed reaction is N(6)-[(R)-lipoyl]-L-lysyl-[glycine-cleavage complex H protein] + glycine + H(+) = N(6)-[(R)-S(8)-aminomethyldihydrolipoyl]-L-lysyl-[glycine-cleavage complex H protein] + CO2. Functionally, the glycine cleavage system catalyzes the degradation of glycine. The P protein binds the alpha-amino group of glycine through its pyridoxal phosphate cofactor; CO(2) is released and the remaining methylamine moiety is then transferred to the lipoamide cofactor of the H protein. This chain is Probable glycine dehydrogenase (decarboxylating) subunit 1, found in Staphylococcus haemolyticus (strain JCSC1435).